Consider the following 105-residue polypeptide: uncharacterized protein (105 aa).

Positions 1–101 (MMDLGDKINP…KDIQEISAAV (101 aa)) constitute a Hcy-binding domain.

This is an uncharacterized protein from Saccharomyces cerevisiae (strain ATCC 204508 / S288c) (Baker's yeast).